The primary structure comprises 865 residues: LINE-1 type transposase domain-containing protein 1 (865 aa).

Residue Ser-2 is modified to N-acetylserine. Ser-2 bears the Phosphoserine mark. A Phosphothreonine modification is found at Thr-149. Residue Ser-154 is modified to Phosphoserine. Positions 370–508 (EMKNLETQEE…EKKASRRQKE (139 aa)) are disordered. Acidic residues-rich tracts occupy residues 376–440 (TQEE…EQTS) and 472–483 (SVEDSESEEEEE). 3 positions are modified to phosphoserine: Ser-472, Ser-476, and Ser-478. Residues 498–508 (TEKKASRRQKE) are compositionally biased toward basic and acidic residues. A phosphoserine mark is found at Ser-518, Ser-561, and Ser-573. The span at 590 to 608 (EEKKHRTLHTEELTSKEAD) shows a compositional bias: basic and acidic residues. The segment at 590–612 (EEKKHRTLHTEELTSKEADLTEE) is disordered. Residues Ser-640, Ser-648, and Ser-665 each carry the phosphoserine modification. Positions 642–684 (VLEIENSVDDLSSRMDILEERIDSLEDQIEEFSKDTMQMTKQI) form a coiled coil.

The protein belongs to the transposase 22 family.

This Homo sapiens (Human) protein is LINE-1 type transposase domain-containing protein 1 (L1TD1).